The primary structure comprises 115 residues: U17-barytoxin-Tl1c (115 aa).

An N-terminal signal peptide occupies residues 1 to 20 (MKTIIVFLSLLVLATKFGDA). The propeptide occupies 21–74 (KEGVNQKQKKEVTQNEFREEYLNEMAAMSLVQQLEAIERALFENEAGRNSRQKR). 3 disulfide bridges follow: cysteine 75/cysteine 89, cysteine 82/cysteine 94, and cysteine 88/cysteine 109.

Belongs to the neurotoxin 14 (magi-1) family. 03 (ICK-30-40) subfamily. As to expression, expressed by the venom gland.

The protein localises to the secreted. In terms of biological role, ion channel inhibitor. This is U17-barytoxin-Tl1c from Trittame loki (Brush-footed trapdoor spider).